A 413-amino-acid chain; its full sequence is NADPH dehydrogenase afvA (413 aa).

FMN is bound at residue 53-56; the sequence is APLC. Tyr58 contributes to the substrate binding site. FMN is bound by residues Ala88 and Gln130. Substrate is bound at residue 211 to 214; sequence HAAH. FMN is bound by residues Arg264 and 370-371; that span reads GR.

Belongs to the NADH:flavin oxidoreductase/NADH oxidase family. NamA subfamily. Requires FMN as cofactor.

The enzyme catalyses A + NADPH + H(+) = AH2 + NADP(+). Its pathway is secondary metabolite biosynthesis. In terms of biological role, NADPH dehydrogenase; part of the gene cluster that mediates the biosynthesis of aflavarin, a bicoumarin that exhibits anti-insectan activity against the fungivorous beetle C.hemipterus. This chain is NADPH dehydrogenase afvA, found in Aspergillus flavus (strain ATCC 200026 / FGSC A1120 / IAM 13836 / NRRL 3357 / JCM 12722 / SRRC 167).